The primary structure comprises 263 residues: Single-stranded DNA-binding protein WHY1, chloroplastic (263 aa).

A chloroplast-targeting transit peptide spans 1 to 47 (MSQLLSTPLMAVNSNPRFLSSSSVLVTGGFAVKRHGFALKPTTKTVK). A required for ssDNA binding region spans residues 89 to 94 (KGKAAL). Positions 167–180 (KGKSDEGKVRKVLK) match the Nuclear localization signal motif.

This sequence belongs to the Whirly family. As to quaternary structure, homotetramer.

The protein localises to the plastid. The protein resides in the chloroplast. Its subcellular location is the nucleus. Functionally, single-stranded DNA-binding protein that functions in both chloroplasts and nucleus. In chloroplasts, maintains plastid genome stability by preventing break-induced and short homology-dependent illegitimate recombinations. In nucleus, modulates telomere length homeostasis by inhibiting the action of the telomerase at the extreme termini of chromosomes. Is recruited to a distal element upstream of the kinesin KP1 to mediate the transcriptional repression of KP1. Is required for full salicylic acid-dependent plant disease resistance responses. Can bind double-stranded DNA in vivo. The polypeptide is Single-stranded DNA-binding protein WHY1, chloroplastic (WHY1) (Arabidopsis thaliana (Mouse-ear cress)).